Here is a 152-residue protein sequence, read N- to C-terminus: SsrA-binding protein (152 aa).

The protein belongs to the SmpB family.

It localises to the cytoplasm. Functionally, required for rescue of stalled ribosomes mediated by trans-translation. Binds to transfer-messenger RNA (tmRNA), required for stable association of tmRNA with ribosomes. tmRNA and SmpB together mimic tRNA shape, replacing the anticodon stem-loop with SmpB. tmRNA is encoded by the ssrA gene; the 2 termini fold to resemble tRNA(Ala) and it encodes a 'tag peptide', a short internal open reading frame. During trans-translation Ala-aminoacylated tmRNA acts like a tRNA, entering the A-site of stalled ribosomes, displacing the stalled mRNA. The ribosome then switches to translate the ORF on the tmRNA; the nascent peptide is terminated with the 'tag peptide' encoded by the tmRNA and targeted for degradation. The ribosome is freed to recommence translation, which seems to be the essential function of trans-translation. In Rickettsia felis (strain ATCC VR-1525 / URRWXCal2) (Rickettsia azadi), this protein is SsrA-binding protein.